The primary structure comprises 239 residues: Dihydromethanopterin reductase (acceptor) (239 aa).

4Fe-4S ferredoxin-type domains lie at 144–175 and 176–205; these read MPYNIDRKQCKHCETCPPRENCPHEAISEKNG and VTDQIDLLKCKGCGICKELCPYNAIKGGPV. [4Fe-4S] cluster is bound by residues C153, C156, C159, C165, C185, C188, C191, and C195.

Homodimer. The cofactor is [4Fe-4S] cluster.

The catalysed reaction is 5,6,7,8-tetrahydromethanopterin + A = 7,8-dihydromethanopterin + AH2. It participates in cofactor biosynthesis; 5,6,7,8-tetrahydromethanopterin biosynthesis. Involved in the biosynthesis of tetrahydromethanopterin, a coenzyme used in methanogenesis. Catalyzes the reduction of dihydromethanopterin (H(2)MPT) to tetrahydromethanopterin (H(4)MPT). Ferredoxin may serve as an electron donor. The sequence is that of Dihydromethanopterin reductase (acceptor) from Methanosarcina mazei (strain ATCC BAA-159 / DSM 3647 / Goe1 / Go1 / JCM 11833 / OCM 88) (Methanosarcina frisia).